Reading from the N-terminus, the 147-residue chain is MCGCVHSTQDQALRLEGEPNPPAAPTSTLAPKNMPKSISISKQLASIKALRKGSDLEKAIATAALVFRNSSDPDGKLRKATAKNLLQTQFKNFAEGQETKARYKDLLSELDEHTENKLDFEDFMVLLLSVTIMSDLLQNIWSVKITQ.

Residues 14–34 (RLEGEPNPPAAPTSTLAPKNM) form a disordered region. Positions 25-34 (PTSTLAPKNM) are enriched in polar residues.

The protein belongs to the S-100 family.

It localises to the cell projection. It is found in the cilium. In terms of biological role, may be a component of the linker structure that bridges the ciliary membrane and peripheral singlet microtubules. The sequence is that of Sentan (SNTN) from Bos taurus (Bovine).